Here is a 742-residue protein sequence, read N- to C-terminus: Probable LRR receptor-like serine/threonine-protein kinase At2g02780 (742 aa).

A signal peptide spans 1–25 (MQISLQIHLSSFTFLLLIFLLPVLS). The Extracellular portion of the chain corresponds to 26–354 (ESQVASSESQ…KDSARIKLGL (329 aa)). 9 LRR repeats span residues 74–96 (HGHVTELTVTGNRTSKLSGSFHK), 104–128 (LSSLKTLSLTSLGISGSLSPKIITK), 130–154 (SPSLESLNLSSNFISGKIPEEIVSL), 156–177 (NLKSLVLRDNMFWGFVSDDLRG), 178–204 (LSNLQELDLGGNKLGPEVPSLPSKLTT), 206–223 (SLKNNSFRSKIPEQIKKL), 224–247 (NNLQSLDLSSNEFTGSIPEFLFSI), 249–271 (SLQILSLDQNLLSGSLPNSSCTS), and 273–294 (KIITLDVSHNLLTGKLPSCYSS). N-linked (GlcNAc...) asparagine glycosylation occurs at Asn85. Asn137 carries an N-linked (GlcNAc...) asparagine glycan. N-linked (GlcNAc...) asparagine glycosylation is present at Asn209. N-linked (GlcNAc...) asparagine glycosylation occurs at Asn266. The N-linked (GlcNAc...) asparagine glycan is linked to Asn299. Residues 355–375 (VILIIIGVIILAAILVLLVLI) traverse the membrane as a helical segment. Topologically, residues 376 to 742 (ALKRRRSRSE…HESSMKAIYE (367 aa)) are cytoplasmic. Residues 386–424 (DDPFEVNNSNNERHASDKVSVCSTTTASSKSLPDSRRVP) are disordered. The segment covering 406-417 (VCSTTTASSKSL) has biased composition (polar residues). A Protein kinase domain is found at 426–720 (TMRSAVIGLP…DVVWNLQYTI (295 aa)).

Belongs to the protein kinase superfamily. Ser/Thr protein kinase family.

Its subcellular location is the membrane. The enzyme catalyses L-seryl-[protein] + ATP = O-phospho-L-seryl-[protein] + ADP + H(+). It carries out the reaction L-threonyl-[protein] + ATP = O-phospho-L-threonyl-[protein] + ADP + H(+). This Arabidopsis thaliana (Mouse-ear cress) protein is Probable LRR receptor-like serine/threonine-protein kinase At2g02780.